Reading from the N-terminus, the 268-residue chain is GTP cyclohydrolase FolE2 (268 aa).

The protein belongs to the GTP cyclohydrolase IV family.

It carries out the reaction GTP + H2O = 7,8-dihydroneopterin 3'-triphosphate + formate + H(+). It functions in the pathway cofactor biosynthesis; 7,8-dihydroneopterin triphosphate biosynthesis; 7,8-dihydroneopterin triphosphate from GTP: step 1/1. Functionally, converts GTP to 7,8-dihydroneopterin triphosphate. The chain is GTP cyclohydrolase FolE2 from Janthinobacterium sp. (strain Marseille) (Minibacterium massiliensis).